Consider the following 491-residue polypeptide: Ketol-acid reductoisomerase (NADP(+)) (491 aa).

The region spanning 15–208 (AQLGKCRFMG…GGHRAGVLES (194 aa)) is the KARI N-terminal Rossmann domain. NADP(+) is bound by residues 45–48 (CGAQ), R68, R76, S78, and 108–110 (DKQ). H132 is a catalytic residue. G158 lines the NADP(+) pocket. KARI C-terminal knotted domains lie at 209-344 (SFVA…TAPQ) and 345-484 (YEGK…MTDM). Residues D217, E221, E389, and E393 each coordinate Mg(2+). Position 414 (S414) interacts with substrate.

Belongs to the ketol-acid reductoisomerase family. The cofactor is Mg(2+).

The enzyme catalyses (2R)-2,3-dihydroxy-3-methylbutanoate + NADP(+) = (2S)-2-acetolactate + NADPH + H(+). The catalysed reaction is (2R,3R)-2,3-dihydroxy-3-methylpentanoate + NADP(+) = (S)-2-ethyl-2-hydroxy-3-oxobutanoate + NADPH + H(+). It functions in the pathway amino-acid biosynthesis; L-isoleucine biosynthesis; L-isoleucine from 2-oxobutanoate: step 2/4. Its pathway is amino-acid biosynthesis; L-valine biosynthesis; L-valine from pyruvate: step 2/4. Involved in the biosynthesis of branched-chain amino acids (BCAA). Catalyzes an alkyl-migration followed by a ketol-acid reduction of (S)-2-acetolactate (S2AL) to yield (R)-2,3-dihydroxy-isovalerate. In the isomerase reaction, S2AL is rearranged via a Mg-dependent methyl migration to produce 3-hydroxy-3-methyl-2-ketobutyrate (HMKB). In the reductase reaction, this 2-ketoacid undergoes a metal-dependent reduction by NADPH to yield (R)-2,3-dihydroxy-isovalerate. The polypeptide is Ketol-acid reductoisomerase (NADP(+)) (Salmonella arizonae (strain ATCC BAA-731 / CDC346-86 / RSK2980)).